The primary structure comprises 712 residues: Polyribonucleotide nucleotidyltransferase (712 aa).

Mg(2+)-binding residues include Asp487 and Asp493. One can recognise a KH domain in the interval 554–613 (PKIITMTINPDKIRDVIGPSGKQINKIIEETGVKIDIEQDGTVFISSINQEMNDKAKKII). Residues 623–691 (GEIYEGKVKR…KQGRVNLSRK (69 aa)) enclose the S1 motif domain.

It belongs to the polyribonucleotide nucleotidyltransferase family. Requires Mg(2+) as cofactor.

The protein resides in the cytoplasm. It carries out the reaction RNA(n+1) + phosphate = RNA(n) + a ribonucleoside 5'-diphosphate. Functionally, involved in mRNA degradation. Catalyzes the phosphorolysis of single-stranded polyribonucleotides processively in the 3'- to 5'-direction. This chain is Polyribonucleotide nucleotidyltransferase, found in Bacillus anthracis.